Consider the following 228-residue polypeptide: Biosynthetic peptidoglycan transglycosylase (228 aa).

Residues 8 to 28 (ILAALVAAFLLYNLWVLGHII) traverse the membrane as a helical segment.

Belongs to the glycosyltransferase 51 family.

The protein resides in the cell inner membrane. The enzyme catalyses [GlcNAc-(1-&gt;4)-Mur2Ac(oyl-L-Ala-gamma-D-Glu-L-Lys-D-Ala-D-Ala)](n)-di-trans,octa-cis-undecaprenyl diphosphate + beta-D-GlcNAc-(1-&gt;4)-Mur2Ac(oyl-L-Ala-gamma-D-Glu-L-Lys-D-Ala-D-Ala)-di-trans,octa-cis-undecaprenyl diphosphate = [GlcNAc-(1-&gt;4)-Mur2Ac(oyl-L-Ala-gamma-D-Glu-L-Lys-D-Ala-D-Ala)](n+1)-di-trans,octa-cis-undecaprenyl diphosphate + di-trans,octa-cis-undecaprenyl diphosphate + H(+). It participates in cell wall biogenesis; peptidoglycan biosynthesis. Functionally, peptidoglycan polymerase that catalyzes glycan chain elongation from lipid-linked precursors. The chain is Biosynthetic peptidoglycan transglycosylase from Chromobacterium violaceum (strain ATCC 12472 / DSM 30191 / JCM 1249 / CCUG 213 / NBRC 12614 / NCIMB 9131 / NCTC 9757 / MK).